The chain runs to 737 residues: Translation initiation factor IF-2 (737 aa).

The segment covering 69 to 80 (EKKEEKPIRKIM) has biased composition (basic and acidic residues). Positions 69–130 (EKKEEKPIRK…HKNKGKKKKG (62 aa)) are disordered. Composition is skewed to basic residues over residues 95-108 (NNKKAKFQQTKNKK) and 121-130 (HKNKGKKKKG). A tr-type G domain is found at 237–404 (ERPPVITIMG…TILITAEILE (168 aa)). The interval 246–253 (GHVDHGKT) is G1. 246-253 (GHVDHGKT) provides a ligand contact to GTP. The tract at residues 271–275 (GITQK) is G2. Positions 292–295 (DTPG) are G3. Residues 292–296 (DTPGH) and 346–349 (NKID) contribute to the GTP site. Residues 346–349 (NKID) are G4. Positions 382–384 (SAK) are G5.

It belongs to the TRAFAC class translation factor GTPase superfamily. Classic translation factor GTPase family. IF-2 subfamily.

Its subcellular location is the cytoplasm. One of the essential components for the initiation of protein synthesis. Protects formylmethionyl-tRNA from spontaneous hydrolysis and promotes its binding to the 30S ribosomal subunits. Also involved in the hydrolysis of GTP during the formation of the 70S ribosomal complex. This chain is Translation initiation factor IF-2, found in Fusobacterium nucleatum subsp. nucleatum (strain ATCC 25586 / DSM 15643 / BCRC 10681 / CIP 101130 / JCM 8532 / KCTC 2640 / LMG 13131 / VPI 4355).